The sequence spans 373 residues: 3-isopropylmalate dehydrogenase (373 aa).

82–93 lines the NAD(+) pocket; sequence GPKWGTGTVRPE. Arg-100, Arg-110, Arg-139, and Asp-231 together coordinate substrate. Asp-231, Asp-256, and Asp-260 together coordinate Mg(2+). 295–306 contacts NAD(+); that stretch reads GSAPDLPANKVN.

This sequence belongs to the isocitrate and isopropylmalate dehydrogenases family. In terms of assembly, homodimer. Mg(2+) is required as a cofactor. Mn(2+) serves as cofactor.

The protein localises to the cytoplasm. It catalyses the reaction (2R,3S)-3-isopropylmalate + NAD(+) = 4-methyl-2-oxopentanoate + CO2 + NADH. It participates in amino-acid biosynthesis; L-leucine biosynthesis; L-leucine from 3-methyl-2-oxobutanoate: step 3/4. Catalyzes the oxidation of 3-carboxy-2-hydroxy-4-methylpentanoate (3-isopropylmalate) to 3-carboxy-4-methyl-2-oxopentanoate. The product decarboxylates to 4-methyl-2 oxopentanoate. The protein is 3-isopropylmalate dehydrogenase (LEU2) of Candida albicans (Yeast).